Reading from the N-terminus, the 385-residue chain is Putative glutamate--cysteine ligase 2 (385 aa).

It belongs to the glutamate--cysteine ligase type 2 family. YbdK subfamily.

It carries out the reaction L-cysteine + L-glutamate + ATP = gamma-L-glutamyl-L-cysteine + ADP + phosphate + H(+). In terms of biological role, ATP-dependent carboxylate-amine ligase which exhibits weak glutamate--cysteine ligase activity. This chain is Putative glutamate--cysteine ligase 2, found in Solibacter usitatus (strain Ellin6076).